Reading from the N-terminus, the 355-residue chain is 3-dehydroquinate synthase (355 aa).

Residues 71–76, 105–109, 129–130, lysine 142, and lysine 151 contribute to the NAD(+) site; these read EGEASK, GVVGD, and TS. Zn(2+) contacts are provided by glutamate 184, histidine 246, and histidine 263.

Belongs to the sugar phosphate cyclases superfamily. Dehydroquinate synthase family. It depends on Co(2+) as a cofactor. The cofactor is Zn(2+). NAD(+) is required as a cofactor.

It is found in the cytoplasm. The enzyme catalyses 7-phospho-2-dehydro-3-deoxy-D-arabino-heptonate = 3-dehydroquinate + phosphate. It functions in the pathway metabolic intermediate biosynthesis; chorismate biosynthesis; chorismate from D-erythrose 4-phosphate and phosphoenolpyruvate: step 2/7. Its function is as follows. Catalyzes the conversion of 3-deoxy-D-arabino-heptulosonate 7-phosphate (DAHP) to dehydroquinate (DHQ). This is 3-dehydroquinate synthase from Streptococcus gordonii (strain Challis / ATCC 35105 / BCRC 15272 / CH1 / DL1 / V288).